Here is a 159-residue protein sequence, read N- to C-terminus: Phosphopantetheine adenylyltransferase (159 aa).

Residue Thr-10 participates in substrate binding. Residues 10 to 11 and His-18 each bind ATP; that span reads TF. Residues Lys-42, Met-74, and Arg-88 each coordinate substrate. Residues 89–91, Glu-99, and 124–130 each bind ATP; these read GLR and WSFISSS.

The protein belongs to the bacterial CoaD family. Homohexamer. Requires Mg(2+) as cofactor.

Its subcellular location is the cytoplasm. The enzyme catalyses (R)-4'-phosphopantetheine + ATP + H(+) = 3'-dephospho-CoA + diphosphate. Its pathway is cofactor biosynthesis; coenzyme A biosynthesis; CoA from (R)-pantothenate: step 4/5. Functionally, reversibly transfers an adenylyl group from ATP to 4'-phosphopantetheine, yielding dephospho-CoA (dPCoA) and pyrophosphate. This chain is Phosphopantetheine adenylyltransferase, found in Yersinia pseudotuberculosis serotype I (strain IP32953).